Consider the following 811-residue polypeptide: U-box domain-containing protein 43 (811 aa).

A U-box domain is found at 24–103; that stretch reads NIYEAFICPL…EEWRARNDAL (80 aa). ARM repeat units lie at residues 136–175, 178–217, 220–261, 263–302, 303–342, 344–388, 399–438, 444–484, and 489–528; these read RKIRQRVCNPQLVRLITDMLKSSSHEVRCKALQTLQVVVE, EESKAIVAEGDTVRTIVKFLSQEPSKGREAAVSVLFELSK, ALCE…NLER, EENVRQMAINGRLQPLLAKLLEGSPETKVSMAFYLGVLAL, NNDVKVIVAQTVGSSLIDLMRTRDMSQREAALGALNNISS, EGSA…NIVN, GPHHQTLVSEEIVENLLQLTSNTGPEIQGKLLAVLVGLTS, INVV…NISP, and ELANALRSTVGQLGSLVSIISENTPTITEEQAAAAGLLAE.

It carries out the reaction S-ubiquitinyl-[E2 ubiquitin-conjugating enzyme]-L-cysteine + [acceptor protein]-L-lysine = [E2 ubiquitin-conjugating enzyme]-L-cysteine + N(6)-ubiquitinyl-[acceptor protein]-L-lysine.. It participates in protein modification; protein ubiquitination. Functionally, functions as an E3 ubiquitin ligase. This chain is U-box domain-containing protein 43 (PUB43), found in Arabidopsis thaliana (Mouse-ear cress).